We begin with the raw amino-acid sequence, 396 residues long: Phosphoglycerate kinase (396 aa).

Residues 21 to 23 (DFN), arginine 36, 59 to 62 (HLGK), arginine 119, and arginine 156 contribute to the substrate site. Residues lysine 206, glycine 294, glutamate 325, and 352–355 (GGDS) contribute to the ATP site.

This sequence belongs to the phosphoglycerate kinase family. In terms of assembly, monomer.

It is found in the cytoplasm. The catalysed reaction is (2R)-3-phosphoglycerate + ATP = (2R)-3-phospho-glyceroyl phosphate + ADP. Its pathway is carbohydrate degradation; glycolysis; pyruvate from D-glyceraldehyde 3-phosphate: step 2/5. The protein is Phosphoglycerate kinase of Listeria monocytogenes serotype 4a (strain HCC23).